We begin with the raw amino-acid sequence, 191 residues long: MSNINVIDILKESDALLEGHFLLSSGRHSNRYCQCAKLLQCPQKAEKVISVIAEKLKEVDFNIIVGPAMGGVIVSYELARQTNKPGIFAERKEGVMCIRRGFEIKKGDKVIISEDVVTTGKSSLEVAKVIEEMGGEVVGIACIVDRRAEDVKTNYPIYSACKLEIETYEKDNCELCKKNIPFVKPGSREQK.

5-phospho-alpha-D-ribose 1-diphosphate is bound at residue 114-122 (EDVVTTGKS). 2 residues coordinate orotate: Thr118 and Arg146.

This sequence belongs to the purine/pyrimidine phosphoribosyltransferase family. PyrE subfamily. In terms of assembly, homodimer. It depends on Mg(2+) as a cofactor.

The enzyme catalyses orotidine 5'-phosphate + diphosphate = orotate + 5-phospho-alpha-D-ribose 1-diphosphate. Its pathway is pyrimidine metabolism; UMP biosynthesis via de novo pathway; UMP from orotate: step 1/2. Functionally, catalyzes the transfer of a ribosyl phosphate group from 5-phosphoribose 1-diphosphate to orotate, leading to the formation of orotidine monophosphate (OMP). In Clostridium botulinum (strain Loch Maree / Type A3), this protein is Orotate phosphoribosyltransferase.